The following is a 188-amino-acid chain: MQELKDRILAEGEVIGTHILKVDTFLNHQIDPAFILRMGKELADRFAGAGITRVLTVEASGIAVASAVALSLNVPVVFAKKKQASTQSDVYTSQIYSFTRQESVNITVSKKFLPADDVVLIVDDFLAHGEALKGLVDIVRQSGAGLAGAGIVIEKLFQRGGAALRAEGMRIETLAAIERMEPGKIVFA.

Residues Leu20 and Asn27 each coordinate xanthine. 127–131 (AHGEA) serves as a coordination point for 5-phospho-alpha-D-ribose 1-diphosphate. Position 155 (Lys155) interacts with xanthine.

This sequence belongs to the purine/pyrimidine phosphoribosyltransferase family. Xpt subfamily. As to quaternary structure, homodimer.

The protein localises to the cytoplasm. It catalyses the reaction XMP + diphosphate = xanthine + 5-phospho-alpha-D-ribose 1-diphosphate. It functions in the pathway purine metabolism; XMP biosynthesis via salvage pathway; XMP from xanthine: step 1/1. Its function is as follows. Converts the preformed base xanthine, a product of nucleic acid breakdown, to xanthosine 5'-monophosphate (XMP), so it can be reused for RNA or DNA synthesis. The chain is Xanthine phosphoribosyltransferase from Heliobacterium modesticaldum (strain ATCC 51547 / Ice1).